A 364-amino-acid polypeptide reads, in one-letter code: Protein leg1b (364 aa).

An N-terminal signal peptide occupies residues 1-22 (MSEMGFLRSVAAVLLLAVFSHA). A glycan (N-linked (GlcNAc...) asparagine) is linked at asparagine 70.

This sequence belongs to the LEG1 family. Detected in all tissues tested, with the highest levels in serum (at protein level). At mRNA level, only expressed in liver.

Its subcellular location is the secreted. Involved in early development of liver, exocrine pancreas and intestine, probably through cell cycle regulation. In liver, its function is partially redundant with leg1a function. The protein is Protein leg1b of Danio rerio (Zebrafish).